The sequence spans 188 residues: Elongation factor P (188 aa).

Belongs to the elongation factor P family.

The protein localises to the cytoplasm. The protein operates within protein biosynthesis; polypeptide chain elongation. Its function is as follows. Involved in peptide bond synthesis. Stimulates efficient translation and peptide-bond synthesis on native or reconstituted 70S ribosomes in vitro. Probably functions indirectly by altering the affinity of the ribosome for aminoacyl-tRNA, thus increasing their reactivity as acceptors for peptidyl transferase. This is Elongation factor P from Pseudomonas aeruginosa (strain LESB58).